We begin with the raw amino-acid sequence, 731 residues long: Ribonuclease R (731 aa).

Residues arginine 260–phenylalanine 589 enclose the RNB domain. The 82-residue stretch at glycine 647–tyrosine 728 folds into the S1 motif domain.

It belongs to the RNR ribonuclease family. RNase R subfamily. As to quaternary structure, monomer.

It is found in the cytoplasm. It carries out the reaction Exonucleolytic cleavage in the 3'- to 5'-direction to yield nucleoside 5'-phosphates.. Functionally, 3'-5' exoribonuclease that releases 5'-nucleoside monophosphates and is involved in maturation of structured RNAs. In Buchnera aphidicola subsp. Acyrthosiphon pisum (strain APS) (Acyrthosiphon pisum symbiotic bacterium), this protein is Ribonuclease R.